The sequence spans 423 residues: Phthiocerol/phthiodiolone dimycocerosyl transferase (423 aa).

His125 serves as the catalytic Proton acceptor.

Belongs to the acyltransferase PapA5 family. In terms of assembly, monomer. Interacts directly with the acyl carrier protein (ACP) domain of the mycocerosic acid synthase (mas) protein.

The catalysed reaction is 2 a mycocerosyl-[mycocerosic acid synthase] + a phthiocerol = a dimycocerosyl phthiocerol + 2 holo-[mycocerosic acid synthase].. It catalyses the reaction 2 a mycocerosyl-[mycocerosic acid synthase] + a phthiodiolone = a dimycocerosyl phthiodiolone + 2 holo-[mycocerosic acid synthase].. The enzyme catalyses 2 a mycocerosyl-[mycocerosic acid synthase] + a phenolphthiocerol = a dimycocerosyl phenolphthiocerol + 2 holo-[mycocerosic acid synthase].. In terms of biological role, catalyzes diesterification of phthiocerol, phthiodiolone, and phenolphthiocerol with mycocerosic acids, the final step in the phthiocerol, phthiodiolone and phenolphthiocerol dimycocerosate esters (PDIM) synthesis. Can directly transfer the mycocerosate bound to the mycocerosic acid synthase (mas) onto the substrate alcohols. In Mycobacterium leprae (strain TN), this protein is Phthiocerol/phthiodiolone dimycocerosyl transferase (papA5).